Here is a 131-residue protein sequence, read N- to C-terminus: Small ribosomal subunit protein uS8 (131 aa).

Belongs to the universal ribosomal protein uS8 family. In terms of assembly, part of the 30S ribosomal subunit. Contacts proteins S5 and S12.

In terms of biological role, one of the primary rRNA binding proteins, it binds directly to 16S rRNA central domain where it helps coordinate assembly of the platform of the 30S subunit. The sequence is that of Small ribosomal subunit protein uS8 from Paracidovorax citrulli (strain AAC00-1) (Acidovorax citrulli).